We begin with the raw amino-acid sequence, 558 residues long: NAD-dependent malic enzyme 2 (558 aa).

Y101 (proton donor) is an active-site residue. R154 lines the NAD(+) pocket. K172 serves as the catalytic Proton acceptor. E243, D244, and D267 together coordinate a divalent metal cation. NAD(+)-binding residues include D267 and N411.

It belongs to the malic enzymes family. As to quaternary structure, homotetramer. Mg(2+) serves as cofactor. It depends on Mn(2+) as a cofactor.

The catalysed reaction is (S)-malate + NAD(+) = pyruvate + CO2 + NADH. It catalyses the reaction oxaloacetate + H(+) = pyruvate + CO2. In Photobacterium profundum (strain SS9), this protein is NAD-dependent malic enzyme 2.